Reading from the N-terminus, the 272-residue chain is Peptidoglycolipid exporter Gap (272 aa).

A run of 6 helical transmembrane segments spans residues 5–25 (ILGLALFVSLNPLLLGFILLV), 36–56 (VVFWVGCLIVNVPGFLIPLFV), 79–99 (IEPFQLGTGIFALAVSAVIAL), 171–191 (LWVALVFGLAYIPPPPLVLLV), 206–226 (IIAVFVFIMAMLAVFEITLLS), and 252–272 (ILLVLFGAVGIWELIVGLGVI).

Belongs to the peptidoglycolipid addressing protein (GAP) (TC 2.A.116) family.

It is found in the cell inner membrane. Its function is as follows. Required for the transport of peptidoglycolipids (GPLs) to the cell surface. The chain is Peptidoglycolipid exporter Gap from Mycolicibacterium smegmatis (strain ATCC 700084 / mc(2)155) (Mycobacterium smegmatis).